Consider the following 277-residue polypeptide: Inositol monophosphatase 1 (277 aa).

The Mg(2+) site is built by glutamate 70, aspartate 90, isoleucine 92, and aspartate 93. Glutamate 70 lines the substrate pocket. A substrate-binding site is contributed by 92-95 (IDGT). A Phosphothreonine modification is found at threonine 168. Residues 194 to 196 (GTA), glutamate 213, and aspartate 220 contribute to the substrate site. Residue aspartate 220 participates in Mg(2+) binding.

It belongs to the inositol monophosphatase superfamily. As to quaternary structure, homodimer. Mg(2+) is required as a cofactor.

It localises to the cytoplasm. It carries out the reaction a myo-inositol phosphate + H2O = myo-inositol + phosphate. The enzyme catalyses 1D-myo-inositol 1-phosphate + H2O = myo-inositol + phosphate. It catalyses the reaction 1D-myo-inositol 2-phosphate + H2O = myo-inositol + phosphate. The catalysed reaction is 1D-myo-inositol 3-phosphate + H2O = myo-inositol + phosphate. It carries out the reaction 1D-myo-inositol 4-phosphate + H2O = myo-inositol + phosphate. The enzyme catalyses 1D-myo-inositol 5-phosphate + H2O = myo-inositol + phosphate. It catalyses the reaction 1D-myo-inositol 6-phosphate + H2O = myo-inositol + phosphate. The catalysed reaction is scyllo-inositol 1-phosphate + H2O = scyllo-inositol + phosphate. It carries out the reaction alpha-D-galactose 1-phosphate + H2O = D-galactose + phosphate. The enzyme catalyses alpha-D-glucose 1-phosphate + H2O = D-glucose + phosphate. It catalyses the reaction D-glucose 6-phosphate + H2O = D-glucose + phosphate. The catalysed reaction is beta-D-fructose 1-phosphate + H2O = D-fructose + phosphate. It carries out the reaction glycerol 2-phosphate + H2O = glycerol + phosphate. The enzyme catalyses adenosine 2'-phosphate + H2O = adenosine + phosphate. It participates in polyol metabolism; myo-inositol biosynthesis; myo-inositol from D-glucose 6-phosphate: step 2/2. Its activity is regulated as follows. Activity with myo-inositol monophosphates and D-galactose 1-phosphate is inhibited by Li(+), Ca(2+) and Mn(2+), but also by Mg(2+) at concentrations above 3 mM. In terms of biological role, phosphatase involved in the dephosphorylation of myo-inositol monophosphates to generate myo-inositol. Is also able to dephosphorylate scyllo-inositol-phosphate, myo-inositol 1,4-diphosphate, scyllo-inositol-1,3-diphosphate and scyllo-inositol-1,4-diphosphate. Also dephosphorylates in vitro other sugar-phosphates including D-galactose-1-phosphate, glucose-1-phosphate, glucose-6-phosphate, fructose-1-phosphate, beta-glycerophosphate and 2'-AMP. Responsible for the provision of inositol required for synthesis of phosphatidylinositols and polyphosphoinositides, and involved in maintaining normal brain function. Has been implicated as the pharmacological target for lithium (Li(+)) action in brain, which is used to treat bipolar affective disorder. Is equally active with 1D-myo-inositol 1-phosphate, 1D-myo-inositol 3-phosphate and D-galactose 1-phosphate. The sequence is that of Inositol monophosphatase 1 from Homo sapiens (Human).